We begin with the raw amino-acid sequence, 140 residues long: Large ribosomal subunit protein mL43 (140 aa).

It belongs to the mitochondrion-specific ribosomal protein mL43 family. As to quaternary structure, component of the mitochondrial large ribosomal subunit (mt-LSU). Mature yeast 74S mitochondrial ribosomes consist of a small (37S) and a large (54S) subunit. The 37S small subunit contains a 15S ribosomal RNA (15S mt-rRNA) and 34 different proteins. The 54S large subunit contains a 21S rRNA (21S mt-rRNA) and 46 different proteins.

Its subcellular location is the mitochondrion. Its function is as follows. Component of the mitochondrial ribosome (mitoribosome), a dedicated translation machinery responsible for the synthesis of mitochondrial genome-encoded proteins, including at least some of the essential transmembrane subunits of the mitochondrial respiratory chain. The mitoribosomes are attached to the mitochondrial inner membrane and translation products are cotranslationally integrated into the membrane. Also has an extraribosomal function, being essential for mitochondrial genome integrity. May interact with MHR1 to take part in the mtDNA repair mechanism. The polypeptide is Large ribosomal subunit protein mL43 (MRPL51) (Saccharomyces cerevisiae (strain ATCC 204508 / S288c) (Baker's yeast)).